The following is a 177-amino-acid chain: Adenine phosphoribosyltransferase (177 aa).

The protein belongs to the purine/pyrimidine phosphoribosyltransferase family. As to quaternary structure, homodimer.

The protein resides in the cytoplasm. The enzyme catalyses AMP + diphosphate = 5-phospho-alpha-D-ribose 1-diphosphate + adenine. The protein operates within purine metabolism; AMP biosynthesis via salvage pathway; AMP from adenine: step 1/1. Its function is as follows. Catalyzes a salvage reaction resulting in the formation of AMP, that is energically less costly than de novo synthesis. This Prosthecochloris aestuarii (strain DSM 271 / SK 413) protein is Adenine phosphoribosyltransferase.